Here is a 411-residue protein sequence, read N- to C-terminus: CinA-like protein (411 aa).

It belongs to the CinA family.

This Dictyoglomus turgidum (strain DSM 6724 / Z-1310) protein is CinA-like protein.